Consider the following 186-residue polypeptide: Probable GTP-binding protein EngB (186 aa).

Residues 18–186 (DKVEICFIGR…LKKLLASEFK (169 aa)) enclose the EngB-type G domain. GTP-binding positions include 26-33 (GRSNVGKS), 52-56 (GRTQL), 70-73 (DLPG), 137-140 (TKID), and 166-168 (VSS). Mg(2+) is bound by residues Ser33 and Thr54.

The protein belongs to the TRAFAC class TrmE-Era-EngA-EngB-Septin-like GTPase superfamily. EngB GTPase family. The cofactor is Mg(2+).

In terms of biological role, necessary for normal cell division and for the maintenance of normal septation. The protein is Probable GTP-binding protein EngB of Mycoplasmopsis pulmonis (strain UAB CTIP) (Mycoplasma pulmonis).